Reading from the N-terminus, the 553-residue chain is Membrane protein insertase YidC (553 aa).

Residues 3 to 23 form a helical membrane-spanning segment; that stretch reads IKRTILWVIFSLSVVLLFDNW. The disordered stretch occupies residues 44–64; that stretch reads AAAPGGTPAGDVPKAAAPAAA. A run of 4 helical transmembrane segments spans residues 359-379, 429-449, 467-487, and 507-527; these read LLGN…LVFF, LGGC…YWVL, LASP…MFVQ, and PIAF…YWVV.

The protein belongs to the OXA1/ALB3/YidC family. Type 1 subfamily. As to quaternary structure, interacts with the Sec translocase complex via SecD. Specifically interacts with transmembrane segments of nascent integral membrane proteins during membrane integration.

Its subcellular location is the cell inner membrane. Its function is as follows. Required for the insertion and/or proper folding and/or complex formation of integral membrane proteins into the membrane. Involved in integration of membrane proteins that insert both dependently and independently of the Sec translocase complex, as well as at least some lipoproteins. Aids folding of multispanning membrane proteins. The polypeptide is Membrane protein insertase YidC (Ralstonia nicotianae (strain ATCC BAA-1114 / GMI1000) (Ralstonia solanacearum)).